A 268-amino-acid polypeptide reads, in one-letter code: Phosphatidylglycerol--prolipoprotein diacylglyceryl transferase (268 aa).

Transmembrane regions (helical) follow at residues 23 to 43, 58 to 78, 96 to 116, and 119 to 139; these read WYAL…LALA, FLTW…VLFY, GGMS…LFCW, and GLSP…GLFF. R141 is an a 1,2-diacyl-sn-glycero-3-phospho-(1'-sn-glycerol) binding site. The next 3 helical transmembrane spans lie at 181–201, 206–226, and 238–258; these read SFLE…MPAV, GMTA…AEFF, and AGAT…VWLV.

Belongs to the Lgt family.

It localises to the cell inner membrane. The catalysed reaction is L-cysteinyl-[prolipoprotein] + a 1,2-diacyl-sn-glycero-3-phospho-(1'-sn-glycerol) = an S-1,2-diacyl-sn-glyceryl-L-cysteinyl-[prolipoprotein] + sn-glycerol 1-phosphate + H(+). Its pathway is protein modification; lipoprotein biosynthesis (diacylglyceryl transfer). In terms of biological role, catalyzes the transfer of the diacylglyceryl group from phosphatidylglycerol to the sulfhydryl group of the N-terminal cysteine of a prolipoprotein, the first step in the formation of mature lipoproteins. The protein is Phosphatidylglycerol--prolipoprotein diacylglyceryl transferase of Azospirillum brasilense.